Here is a 341-residue protein sequence, read N- to C-terminus: tRNA N6-adenosine threonylcarbamoyltransferase (341 aa).

Residues His120 and His124 each contribute to the Fe cation site. Residues 142–146 (VVSGG), Asp175, Gly188, Asp192, and Asn281 each bind substrate. Residue Asp310 coordinates Fe cation.

It belongs to the KAE1 / TsaD family. Fe(2+) serves as cofactor.

It localises to the cytoplasm. It catalyses the reaction L-threonylcarbamoyladenylate + adenosine(37) in tRNA = N(6)-L-threonylcarbamoyladenosine(37) in tRNA + AMP + H(+). Functionally, required for the formation of a threonylcarbamoyl group on adenosine at position 37 (t(6)A37) in tRNAs that read codons beginning with adenine. Is involved in the transfer of the threonylcarbamoyl moiety of threonylcarbamoyl-AMP (TC-AMP) to the N6 group of A37, together with TsaE and TsaB. TsaD likely plays a direct catalytic role in this reaction. This is tRNA N6-adenosine threonylcarbamoyltransferase from Anoxybacillus flavithermus (strain DSM 21510 / WK1).